The primary structure comprises 1131 residues: Tyrosine-protein kinase JAK2 (1131 aa).

Residues 1-239 form an interaction with cytokine/interferon/growth hormone receptors region; that stretch reads MGMACLTMTE…RYRFRRFIEQ (239 aa). The region spanning 37-380 is the FERM domain; that stretch reads PVLQVYLYHS…GYYRLTADAH (344 aa). Tyr119 carries the phosphotyrosine; by autocatalysis modification. Tyr372 and Tyr373 each carry phosphotyrosine. Residues 401–482 form the SH2; atypical domain; that stretch reads HGPISMDFAI…NLKDLLNCYQ (82 aa). Ser523 carries the post-translational modification Phosphoserine. A Protein kinase 1 domain is found at 545 to 809; it reads LIFNESLGQG…AIIRDLNSLF (265 aa). A phosphotyrosine mark is found at Tyr570 and Tyr813. In terms of domain architecture, Protein kinase 2 spans 849–1126; it reads LKFLQQLGKG…RDLALRVDQI (278 aa). 855-863 contacts ATP; the sequence is LGKGNFGSV. Position 868 is a phosphotyrosine; by autocatalysis (Tyr868). Residue Lys882 coordinates ATP. Phosphotyrosine; by autocatalysis is present on residues Tyr966 and Tyr972. Asp976 serves as the catalytic Proton acceptor. Residues Tyr1007 and Tyr1008 each carry the phosphotyrosine; by autocatalysis modification.

Belongs to the protein kinase superfamily. Tyr protein kinase family. JAK subfamily. As to quaternary structure, interacts with IL23R, SKB1 and STAM2. Interacts with EPOR. Interacts with LYN. Interacts with SIRPA. Interacts with SH2B1. Interacts with TEC. Interacts with IFNGR2 (via intracellular domain). Interacts with LEPR (Isoform B). Interacts with HSP90AB1; promotes functional activation in a heat shock-dependent manner. Interacts with STRA6. Interacts with ASB2; the interaction targets JAK2 for Notch-induced proteasomal degradation. Mg(2+) is required as a cofactor. Post-translationally, autophosphorylated, leading to regulate its activity. Leptin promotes phosphorylation on tyrosine residues, including phosphorylation on Tyr-813. Autophosphorylation on Tyr-119 in response to EPO down-regulates its kinase activity. Autophosphorylation on Tyr-868, Tyr-966 and Tyr-972 in response to growth hormone (GH) are required for maximal kinase activity. Also phosphorylated by TEC. Phosphorylated on tyrosine residues in response to interferon gamma signaling. Phosphorylated on tyrosine residues in response to a signaling cascade that is activated by increased cellular retinol. In terms of processing, undergoes Notch-induced ubiquitination and subsequent proteasomal degradation which is mediated by ASB1 or ASB2, the substrate-recognition components of probable ECS E3 ubiquitin-protein ligase complexes.

Its subcellular location is the endomembrane system. It localises to the cytoplasm. The protein resides in the nucleus. It catalyses the reaction L-tyrosyl-[protein] + ATP = O-phospho-L-tyrosyl-[protein] + ADP + H(+). Its activity is regulated as follows. Regulated by autophosphorylation, can both activate or decrease activity. Heme regulates its activity by enhancing the phosphorylation on Tyr-1007 and Tyr-1008. Non-receptor tyrosine kinase involved in various processes such as cell growth, development, differentiation or histone modifications. Mediates essential signaling events in both innate and adaptive immunity. In the cytoplasm, plays a pivotal role in signal transduction via its association with type I receptors such as growth hormone (GHR), prolactin (PRLR), leptin (LEPR), erythropoietin (EPOR), thrombopoietin (THPO); or type II receptors including IFN-alpha, IFN-beta, IFN-gamma and multiple interleukins. Following ligand-binding to cell surface receptors, phosphorylates specific tyrosine residues on the cytoplasmic tails of the receptor, creating docking sites for STATs proteins. Subsequently, phosphorylates the STATs proteins once they are recruited to the receptor. Phosphorylated STATs then form homodimer or heterodimers and translocate to the nucleus to activate gene transcription. For example, cell stimulation with erythropoietin (EPO) during erythropoiesis leads to JAK2 autophosphorylation, activation, and its association with erythropoietin receptor (EPOR) that becomes phosphorylated in its cytoplasmic domain. Then, STAT5 (STAT5A or STAT5B) is recruited, phosphorylated and activated by JAK2. Once activated, dimerized STAT5 translocates into the nucleus and promotes the transcription of several essential genes involved in the modulation of erythropoiesis. Part of a signaling cascade that is activated by increased cellular retinol and that leads to the activation of STAT5 (STAT5A or STAT5B). In addition, JAK2 mediates angiotensin-2-induced ARHGEF1 phosphorylation. Plays a role in cell cycle by phosphorylating CDKN1B. Cooperates with TEC through reciprocal phosphorylation to mediate cytokine-driven activation of FOS transcription. In the nucleus, plays a key role in chromatin by specifically mediating phosphorylation of 'Tyr-41' of histone H3 (H3Y41ph), a specific tag that promotes exclusion of CBX5 (HP1 alpha) from chromatin. Up-regulates the potassium voltage-gated channel activity of KCNA3. The chain is Tyrosine-protein kinase JAK2 from Sus scrofa (Pig).